The primary structure comprises 203 residues: SCO2-like protein RT0576 (203 aa).

The 162-residue stretch at 42-203 folds into the Thioredoxin domain; it reads KDNIKIGEAF…KEIMEFLRNE (162 aa). Cu cation contacts are provided by Cys-80, Cys-84, and His-170.

This sequence belongs to the SCO1/2 family.

This is SCO2-like protein RT0576 from Rickettsia typhi (strain ATCC VR-144 / Wilmington).